Here is a 421-residue protein sequence, read N- to C-terminus: UDP-N-acetylglucosamine 1-carboxyvinyltransferase (421 aa).

22–23 (KN) contacts phosphoenolpyruvate. A UDP-N-acetyl-alpha-D-glucosamine-binding site is contributed by Arg-93. Catalysis depends on Cys-117, which acts as the Proton donor. At Cys-117 the chain carries 2-(S-cysteinyl)pyruvic acid O-phosphothioketal. UDP-N-acetyl-alpha-D-glucosamine is bound by residues 122–126 (RPVDL), Asp-308, and Ile-330.

This sequence belongs to the EPSP synthase family. MurA subfamily.

The protein localises to the cytoplasm. The catalysed reaction is phosphoenolpyruvate + UDP-N-acetyl-alpha-D-glucosamine = UDP-N-acetyl-3-O-(1-carboxyvinyl)-alpha-D-glucosamine + phosphate. The protein operates within cell wall biogenesis; peptidoglycan biosynthesis. Cell wall formation. Adds enolpyruvyl to UDP-N-acetylglucosamine. This chain is UDP-N-acetylglucosamine 1-carboxyvinyltransferase, found in Pseudomonas fluorescens (strain Pf0-1).